The chain runs to 1153 residues: MTAPRYAEIGVTSNFSFLEGGSHPQEFVQQASALGLAAIGIADRNTLAGVVRAYSELDNEELFYKPKLLIGARLCFADGTPDILAYPTDRAAYGRLCRLLSAGKLRAGKGECHLSFADLEAFTKTSTPSWPGLSRPSTSSSKAVQVSVDARVKPGHDEAKRAAGESRLLLVLMPPYRFQSHEITAALTRLTALQGAGVWLALVPYYRGDDKRRLARLQRIAAAARVPGIASNDVLYHHESRRALQDVLTCVRDKTTIDKAGRLLESNAERYLKPTEEMARLFRADPDAIAETLRFADRISFTLDELKYQYPDEPVPPGKTAQQHLKDLTEQGIAEYFPNGIDAKLRATIDKELTIIAHRQYAPYFLTVHDIVRYARSQNILCQGRGSAANSAVCYVLGITCVDPTEIDLLFERFVSEERDEPPDIDVDFEHSRREEVMQYIYRRYGRHRAAIVSTVIHYRPRSAIRDVGKALGLSEDVTAALADTVWGSWGKGLNEMQVRQAGLDPTNPMIVRAIDLATELIGFPRHLSQHVGGYVLTQDRLDEFVPIGNAAMEERTFIEWDKDDIDAVKMMKVDVLALGMLTCIRKGFDLIAQHKGKRYELADIKSEDDNEVYKMLQRGESVGVFQVESRAQMNMLPRLRPRCFYDLVIEVAIVRPGPIQGDMVHPYLRRRNGQEPVVYPSPAGHAGEANELKTILGKTLGVPLFQEQAMRIAIEAAHFTPDEANQLRRAMATFRNVGTIGKFEAKMTGNLVARGYDPVFAQNCFEQIKGFGSYGFPESHAASFAKLVYVSAWLKHAHPDAFCCALLNSQPMGFYAPAQIVGDARQNGVEIRGVDVAYSFSQNTLEERCGQHHAVRLGFRQIDGFRWADFDEANLWQARGDAPPEDWGARIVEAREKSPFTSLEQFARATALPKRALILLADADAFRSLKLDRRAALWAVRRLPDDVPLPLFEVAKAREQQDENAAPLPLMPLAEHVVADYQTVRLSLKGHPMQFLRALFAAEGVNTCRAVSETRRNGRRARCAGVVLVRQRPGSAKGVVFITLEDETGIANLVVWPAVMEKFRKEVMGARLLWVEGKIQASPEGVVHLVAEELVDRSAEMARLSDELIAPSASTEREAPLNDDRRDHPDLPAQQIRHPRNVRILPPSRDFH.

The disordered stretch occupies residues Asp-1107 to His-1153. Over residues Thr-1116–Asp-1131 the composition is skewed to basic and acidic residues.

The protein belongs to the DNA polymerase type-C family. DnaE2 subfamily.

The protein localises to the cytoplasm. The enzyme catalyses DNA(n) + a 2'-deoxyribonucleoside 5'-triphosphate = DNA(n+1) + diphosphate. In terms of biological role, DNA polymerase involved in damage-induced mutagenesis and translesion synthesis (TLS). It is not the major replicative DNA polymerase. This chain is Error-prone DNA polymerase, found in Rhodopseudomonas palustris (strain BisA53).